A 450-amino-acid chain; its full sequence is Phosphoglucosamine mutase (450 aa).

The Phosphoserine intermediate role is filled by S97. Mg(2+)-binding residues include S97, D236, D238, and D240. Residue S97 is modified to Phosphoserine.

This sequence belongs to the phosphohexose mutase family. The cofactor is Mg(2+). Post-translationally, activated by phosphorylation.

The catalysed reaction is alpha-D-glucosamine 1-phosphate = D-glucosamine 6-phosphate. Its function is as follows. Catalyzes the conversion of glucosamine-6-phosphate to glucosamine-1-phosphate. This is Phosphoglucosamine mutase from Prochlorococcus marinus (strain MIT 9312).